The primary structure comprises 269 residues: Mitochondrial distribution and morphology protein 12 (269 aa).

One can recognise an SMP-LTD domain in the interval 1 to 269; the sequence is MSLEVNWEQI…WPNWIEFQGV (269 aa). The disordered stretch occupies residues 72–119; that stretch reads ERAGTGEGDEDDGRVAPTSTPMKHQTSGSSDQTDASNPISPSTSHDHE. The span at 88-114 shows a compositional bias: polar residues; the sequence is PTSTPMKHQTSGSSDQTDASNPISPST.

It belongs to the MDM12 family. Component of the ER-mitochondria encounter structure (ERMES) or MDM complex, composed of MMM1, MDM10, MDM12 and MDM34. An MMM1 homodimer associates with one molecule of MDM12 on each side in a pairwise head-to-tail manner, and the SMP-LTD domains of MMM1 and MDM12 generate a continuous hydrophobic tunnel for phospholipid trafficking.

The protein resides in the mitochondrion outer membrane. The protein localises to the endoplasmic reticulum membrane. In terms of biological role, component of the ERMES/MDM complex, which serves as a molecular tether to connect the endoplasmic reticulum (ER) and mitochondria. Components of this complex are involved in the control of mitochondrial shape and protein biogenesis, and function in nonvesicular lipid trafficking between the ER and mitochondria. MDM12 is required for the interaction of the ER-resident membrane protein MMM1 and the outer mitochondrial membrane-resident beta-barrel protein MDM10. The MDM12-MMM1 subcomplex functions in the major beta-barrel assembly pathway that is responsible for biogenesis of all mitochondrial outer membrane beta-barrel proteins, and acts in a late step after the SAM complex. The MDM10-MDM12-MMM1 subcomplex further acts in the TOM40-specific pathway after the action of the MDM12-MMM1 complex. Essential for establishing and maintaining the structure of mitochondria and maintenance of mtDNA nucleoids. This is Mitochondrial distribution and morphology protein 12 from Komagataella phaffii (strain GS115 / ATCC 20864) (Yeast).